The following is a 184-amino-acid chain: ADP-ribosylation factor 6 (184 aa).

A lipid anchor (N-myristoyl glycine) is attached at Gly2. GTP-binding positions include Gly28–Thr35, Asp71–Gln75, and Asn130–Asp133.

The protein belongs to the small GTPase superfamily. Arf family.

The protein localises to the cell membrane. GTP-binding protein that functions as a molecular switch for the activation of 'new end take off' (NETO), a process in which the directions of cell growth change from a monopolar manner to a bipolar manner in fission yeast. Involved in supplying membrane to the growing new end. In Schizosaccharomyces pombe (strain 972 / ATCC 24843) (Fission yeast), this protein is ADP-ribosylation factor 6 (arf6).